The sequence spans 97 residues: Large ribosomal subunit protein uL23 (97 aa).

Belongs to the universal ribosomal protein uL23 family. In terms of assembly, part of the 50S ribosomal subunit. Contacts protein L29, and trigger factor when it is bound to the ribosome.

Functionally, one of the early assembly proteins it binds 23S rRNA. One of the proteins that surrounds the polypeptide exit tunnel on the outside of the ribosome. Forms the main docking site for trigger factor binding to the ribosome. This is Large ribosomal subunit protein uL23 from Myxococcus xanthus (strain DK1622).